We begin with the raw amino-acid sequence, 341 residues long: Large ribosomal subunit protein uL3 (341 aa).

Disordered stretches follow at residues 1 to 31 and 234 to 261; these read MGHRKLSSPRRGSAGLRPRKRSEELLPSPRS and HRKGSRKVGTKGPSLGTPSYVPQPGQMG.

The protein belongs to the universal ribosomal protein uL3 family. In terms of assembly, part of the 50S ribosomal subunit. Forms a cluster with proteins L14 and L24e.

In terms of biological role, one of the primary rRNA binding proteins, it binds directly near the 3'-end of the 23S rRNA, where it nucleates assembly of the 50S subunit. This chain is Large ribosomal subunit protein uL3, found in Metallosphaera sedula (strain ATCC 51363 / DSM 5348 / JCM 9185 / NBRC 15509 / TH2).